The chain runs to 391 residues: Inactive polyketide synthase 2 (391 aa).

Residue cysteine 164 is part of the active site.

Belongs to the thiolase-like superfamily. Chalcone/stilbene synthases family. As to quaternary structure, homodimer.

In Rubus idaeus (Raspberry), this protein is Inactive polyketide synthase 2 (PKS2).